Reading from the N-terminus, the 362-residue chain is Aminomethyltransferase (362 aa).

It belongs to the GcvT family. In terms of assembly, the glycine cleavage system is composed of four proteins: P, T, L and H.

It catalyses the reaction N(6)-[(R)-S(8)-aminomethyldihydrolipoyl]-L-lysyl-[protein] + (6S)-5,6,7,8-tetrahydrofolate = N(6)-[(R)-dihydrolipoyl]-L-lysyl-[protein] + (6R)-5,10-methylene-5,6,7,8-tetrahydrofolate + NH4(+). The glycine cleavage system catalyzes the degradation of glycine. In Listeria monocytogenes serotype 4b (strain CLIP80459), this protein is Aminomethyltransferase.